The following is a 213-amino-acid chain: Nickel-cobalt-cadmium resistance protein NccN (213 aa).

4 helical membrane-spanning segments follow: residues 24–44, 48–68, 113–133, and 180–200; these read IGIW…GHSQ, TWIS…ATVG, ESIT…PAVI, and NLAD…VELA.

It to A.eutrophus CzcN.

It is found in the cell inner membrane. Functionally, component of the NCC cation-efflux system that confers resistance to nickel, cobalt and cadmium. Appears to be involved in metal specificity but affects only nickel resistance. May be involved in nickel transport. This chain is Nickel-cobalt-cadmium resistance protein NccN (nccN), found in Alcaligenes xylosoxydans xylosoxydans (Achromobacter xylosoxidans).